We begin with the raw amino-acid sequence, 347 residues long: NADH-ubiquinone oxidoreductase chain 2 (347 aa).

Transmembrane regions (helical) follow at residues 3-23, 25-45, 59-79, 96-116, 122-142, 145-165, 178-198, 202-222, 240-260, 276-296, and 326-346; these read PLIFPIIMLTIMLGTLIVMIS, HWLMIWMGFEMNMLAVIPVLM, YFLTQATASMLLMLAIVINLL, IIMTLALTMKLGLAPFHFWVP, VSLTSGLVLLTWQKLAPLSVL, IAPVINSDLILTMSILSIMIG, ILAYSSIAHMGWMTSVLIFNP, LLNLLLYILMTSTTFALFMTV, ITTSILIMMLSLGGLPPLTGF, IILATLMAIAALLSLFFYMRL, and LSPLIILSTLTLPLAPAMMIL.

The protein belongs to the complex I subunit 2 family. In terms of assembly, core subunit of respiratory chain NADH dehydrogenase (Complex I) which is composed of 45 different subunits. Interacts with TMEM242.

It localises to the mitochondrion inner membrane. It carries out the reaction a ubiquinone + NADH + 5 H(+)(in) = a ubiquinol + NAD(+) + 4 H(+)(out). In terms of biological role, core subunit of the mitochondrial membrane respiratory chain NADH dehydrogenase (Complex I) which catalyzes electron transfer from NADH through the respiratory chain, using ubiquinone as an electron acceptor. Essential for the catalytic activity and assembly of complex I. This is NADH-ubiquinone oxidoreductase chain 2 from Peropteryx macrotis (Lesser dog-like bat).